Consider the following 152-residue polypeptide: Nucleoside diphosphate kinase A (152 aa).

ATP-binding residues include Lys-12, Phe-60, Arg-88, and Thr-94. Lys-100 participates in a covalent cross-link: Glycyl lysine isopeptide (Lys-Gly) (interchain with G-Cter in ubiquitin). Arg-105 and Asn-115 together coordinate ATP. The Pros-phosphohistidine intermediate role is filled by His-118. Phosphoserine occurs at positions 120, 122, and 125.

This sequence belongs to the NDK family. In terms of assembly, hexamer of two different chains: An and B (A6, A5B, A4B2, A3B3, A2B4, AB5, B6). Interacts with PRUNE1. Component of the SET complex, composed of at least ANP32A, APEX1, HMGB2, NME1, SET and TREX1. Within this complex, interacts directly with SET. Also interacts with TREX1, but only following translocation to the nucleus. The cofactor is Mg(2+).

The protein localises to the cytoplasm. The protein resides in the nucleus. It catalyses the reaction a 2'-deoxyribonucleoside 5'-diphosphate + ATP = a 2'-deoxyribonucleoside 5'-triphosphate + ADP. The catalysed reaction is a ribonucleoside 5'-diphosphate + ATP = a ribonucleoside 5'-triphosphate + ADP. Its activity is regulated as follows. Autophosphorylation at His-118 increases serine/threonine protein kinase activity of the enzyme. Interaction with the SET complex inhibits exonuclease activity. Major role in the synthesis of nucleoside triphosphates other than ATP. The ATP gamma phosphate is transferred to the NDP beta phosphate via a ping-pong mechanism, using a phosphorylated active-site intermediate. Possesses nucleoside-diphosphate kinase, serine/threonine-specific protein kinase, geranyl and farnesyl pyrophosphate kinase, histidine protein kinase and 3'-5' exonuclease activities. Involved in cell proliferation, differentiation and development, signal transduction, G protein-coupled receptor endocytosis, and gene expression. Required for neural development including neural patterning and cell fate determination. During GZMA-mediated cell death, works in concert with TREX1. NME1 nicks one strand of DNA and TREX1 removes bases from the free 3' end to enhance DNA damage and prevent DNA end reannealing and rapid repair. The chain is Nucleoside diphosphate kinase A (Nme1) from Rattus norvegicus (Rat).